Reading from the N-terminus, the 149-residue chain is Nucleoside diphosphate kinase (149 aa).

K9, F57, R85, T91, R102, and N112 together coordinate ATP. H115 functions as the Pros-phosphohistidine intermediate in the catalytic mechanism.

The protein belongs to the NDK family. In terms of assembly, homotetramer. It depends on Mg(2+) as a cofactor.

The protein resides in the cytoplasm. It catalyses the reaction a 2'-deoxyribonucleoside 5'-diphosphate + ATP = a 2'-deoxyribonucleoside 5'-triphosphate + ADP. It carries out the reaction a ribonucleoside 5'-diphosphate + ATP = a ribonucleoside 5'-triphosphate + ADP. Its function is as follows. Major role in the synthesis of nucleoside triphosphates other than ATP. The ATP gamma phosphate is transferred to the NDP beta phosphate via a ping-pong mechanism, using a phosphorylated active-site intermediate. This chain is Nucleoside diphosphate kinase, found in Staphylococcus haemolyticus (strain JCSC1435).